We begin with the raw amino-acid sequence, 312 residues long: 4-diphosphocytidyl-2-C-methyl-D-erythritol kinase (312 aa).

Residue Lys-18 is part of the active site. 104–114 is a binding site for ATP; the sequence is PIAGGMGGGSA. Asp-146 is an active-site residue.

The protein belongs to the GHMP kinase family. IspE subfamily.

It carries out the reaction 4-CDP-2-C-methyl-D-erythritol + ATP = 4-CDP-2-C-methyl-D-erythritol 2-phosphate + ADP + H(+). It participates in isoprenoid biosynthesis; isopentenyl diphosphate biosynthesis via DXP pathway; isopentenyl diphosphate from 1-deoxy-D-xylulose 5-phosphate: step 3/6. Its function is as follows. Catalyzes the phosphorylation of the position 2 hydroxy group of 4-diphosphocytidyl-2C-methyl-D-erythritol. This chain is 4-diphosphocytidyl-2-C-methyl-D-erythritol kinase, found in Clavibacter michiganensis subsp. michiganensis (strain NCPPB 382).